A 653-amino-acid chain; its full sequence is Rab11 family-interacting protein 5 (653 aa).

Residues 5 to 146 (RGAEPAAGPS…AGRAQHTQWY (142 aa)) form the C2 domain. Residues Ser176, Ser283, Ser286, Ser307, Ser357, and Ser367 each carry the phosphoserine modification. Residues 269–300 (GPGAELLTRSPSRSSWLSTEGGRDSAQSPKLF) are disordered. Residues 277 to 286 (RSPSRSSWLS) are compositionally biased toward polar residues. Disordered stretches follow at residues 342-402 (HIYN…AVLG) and 415-548 (PGAS…RSSL). A compositionally biased stretch (low complexity) spans 357–368 (SISGSLPSSGSL). Residues 375–387 (FSEEGPRSTDDTW) are compositionally biased toward basic and acidic residues. 2 positions are modified to phosphoserine: Ser391 and Ser395. Composition is skewed to basic and acidic residues over residues 420–430 (PGEEEGARLPE) and 447–460 (VAEK…ERKP). 4 positions are modified to phosphoserine: Ser494, Ser538, Ser547, and Ser553. The region spanning 586–648 (KDSAVLDQSA…ETSPTLLQIP (63 aa)) is the FIP-RBD domain.

Interacts with RAB11FIP4. Interacts with NAPG. Interacts with RO60. Interacts with RAB11A that has been activated by GTP binding. As to quaternary structure, (Microbial infection) Interacts with Kaposi's sarcoma-associated herpesvirus/HHV-8 protein ORF45; this interaction results in the lysosomal degradation of ORF45 and the inhibition of viral particle release. Post-translationally, phosphorylated on serine and threonine residues. Phosphorylation at Ser-357 is PKA-dependent. Detected at low levels in heart, brain, placenta, lung, liver, adipocytes, kidney, spleen, skeletal muscle and pancreas.

The protein resides in the cytoplasm. It localises to the recycling endosome membrane. It is found in the early endosome membrane. The protein localises to the golgi apparatus membrane. Its subcellular location is the cytoplasmic vesicle. The protein resides in the secretory vesicle membrane. It localises to the mitochondrion membrane. Its function is as follows. Rab effector involved in protein trafficking from apical recycling endosomes to the apical plasma membrane. Involved in insulin granule exocytosis. May regulate V-ATPase intracellular transport in response to extracellular acidosis. This Homo sapiens (Human) protein is Rab11 family-interacting protein 5.